Consider the following 27-residue polypeptide: Toxin TdII-4 (27 aa).

An LCN-type CS-alpha/beta domain is found at 1–27 (KDGYLMEPNGCKLGCLTRPAKYCWXEE).

This sequence belongs to the long (4 C-C) scorpion toxin superfamily. Sodium channel inhibitor family. Beta subfamily. Expressed by the venom gland.

It is found in the secreted. In terms of biological role, beta toxins bind voltage-independently at site-4 of sodium channels (Nav) and shift the voltage of activation toward more negative potentials thereby affecting sodium channel activation and promoting spontaneous and repetitive firing. This toxin is active against mammals and also affects neuromuscular preparations of frog. The polypeptide is Toxin TdII-4 (Tityus discrepans (Venezuelan scorpion)).